The following is a 220-amino-acid chain: Pyridoxine/pyridoxamine 5'-phosphate oxidase (220 aa).

FMN is bound by residues 69 to 74 (RVVLLK), 84 to 85 (YT), R90, K91, and Q113. K74 lines the substrate pocket. Substrate contacts are provided by Y131, R135, and S139. FMN contacts are provided by residues 148–149 (QS) and W193. 199–201 (RLH) provides a ligand contact to substrate. R203 contacts FMN.

It belongs to the pyridoxamine 5'-phosphate oxidase family. In terms of assembly, homodimer. FMN serves as cofactor.

It carries out the reaction pyridoxamine 5'-phosphate + O2 + H2O = pyridoxal 5'-phosphate + H2O2 + NH4(+). It catalyses the reaction pyridoxine 5'-phosphate + O2 = pyridoxal 5'-phosphate + H2O2. The protein operates within cofactor metabolism; pyridoxal 5'-phosphate salvage; pyridoxal 5'-phosphate from pyridoxamine 5'-phosphate: step 1/1. It functions in the pathway cofactor metabolism; pyridoxal 5'-phosphate salvage; pyridoxal 5'-phosphate from pyridoxine 5'-phosphate: step 1/1. Its function is as follows. Catalyzes the oxidation of either pyridoxine 5'-phosphate (PNP) or pyridoxamine 5'-phosphate (PMP) into pyridoxal 5'-phosphate (PLP). This Myxococcus xanthus protein is Pyridoxine/pyridoxamine 5'-phosphate oxidase.